The chain runs to 472 residues: UDP-N-acetylmuramate--L-alanine ligase (472 aa).

122-128 provides a ligand contact to ATP; it reads GSHGKTT.

It belongs to the MurCDEF family.

Its subcellular location is the cytoplasm. It catalyses the reaction UDP-N-acetyl-alpha-D-muramate + L-alanine + ATP = UDP-N-acetyl-alpha-D-muramoyl-L-alanine + ADP + phosphate + H(+). It participates in cell wall biogenesis; peptidoglycan biosynthesis. Functionally, cell wall formation. The polypeptide is UDP-N-acetylmuramate--L-alanine ligase (Prochlorococcus marinus (strain SARG / CCMP1375 / SS120)).